A 353-amino-acid chain; its full sequence is Lysophosphatidic acid receptor 3 (353 aa).

At 1-31 (MNECHYDKHMDFFYNRSNTDTVDDWTGTKLV) the chain is on the extracellular side. N15 carries an N-linked (GlcNAc...) asparagine glycan. The chain crosses the membrane as a helical span at residues 32–52 (IVLCVGTFFCLFIFFSNSLVI). Topologically, residues 53 to 67 (AAVIKNRKFHFPFYY) are cytoplasmic. Residues 68-88 (LLANLAAADFFAGIAYVFLMF) traverse the membrane as a helical segment. Residues 89 to 101 (NTGPVSKTLTVNR) lie on the Extracellular side of the membrane. Residues 102–124 (WFLRQGLLDSSLTASLTNLLVIA) form a helical membrane-spanning segment. Residues 125–146 (VERHMSIMRMRVHSNLTKKRVT) are Cytoplasmic-facing. The chain crosses the membrane as a helical span at residues 147-167 (LLILLVWAIAIFMGAVPTLGW). At 168 to 186 (NCLCNISACSSLAPIYSRS) the chain is on the extracellular side. An N-linked (GlcNAc...) asparagine glycan is attached at N172. The chain crosses the membrane as a helical span at residues 187-207 (YLVFWTVSNLMAFLIMVVVYL). The Cytoplasmic segment spans residues 208-240 (RIYVYVKRKTNVLSPHTSGSISRRRTPMKLMKT). The chain crosses the membrane as a helical span at residues 241 to 261 (VMTVLGAFVVCWTPGLVVLLL). The Extracellular segment spans residues 262–276 (DGLNCRQCGVQHVKR). Residues 277–297 (WFLLLALLNSVVNPIIYSYKD) form a helical membrane-spanning segment. The Cytoplasmic segment spans residues 298–353 (EDMYGTMKKMICCFSQENPERRPSRIPSTVLSRSDTGSQYIEDSISQGAVCNKSTS). C309 carries S-palmitoyl cysteine lipidation.

Belongs to the G-protein coupled receptor 1 family. Most abundantly expressed in prostate, testes, pancreas, and heart, with moderate levels in lung and ovary. No detectable expression in brain, placenta, liver, skeletal muscle, kidney, spleen, thymus, small intestine, colon, or peripheral blood leukocytes.

It localises to the cell membrane. In terms of biological role, receptor for lysophosphatidic acid (LPA), a mediator of diverse cellular activities. May play a role in the development of ovarian cancer. Seems to be coupled to the G(i)/G(o) and G(q) families of heteromeric G proteins. This is Lysophosphatidic acid receptor 3 (LPAR3) from Homo sapiens (Human).